Consider the following 209-residue polypeptide: MGKFQVLDHPLIQHKLSIIRDKNCGTREFRQCVNEIAELMVYEVSRDMPLEDVEVETPITKATTKRLAGKKVVVVPILRAGIGMVDGILELIPAAKVGHIGMYRDEETLQPHEYFVKMPDDLENREMIIVDPMLATGGSAIMAVDALKKRGAKSIKFVCLVAAPEGVKAFREAHPDVDIYSASLDEYLNEDGYIVPGLGDAGDRLFGTK.

Residues Arg-79, Arg-104, and 131–139 (DPMLATGGS) each bind 5-phospho-alpha-D-ribose 1-diphosphate. Residues Ile-194 and 199–201 (GDA) each bind uracil. Asp-200 contributes to the 5-phospho-alpha-D-ribose 1-diphosphate binding site.

Belongs to the UPRTase family. Mg(2+) serves as cofactor.

It catalyses the reaction UMP + diphosphate = 5-phospho-alpha-D-ribose 1-diphosphate + uracil. It participates in pyrimidine metabolism; UMP biosynthesis via salvage pathway; UMP from uracil: step 1/1. With respect to regulation, allosterically activated by GTP. Functionally, catalyzes the conversion of uracil and 5-phospho-alpha-D-ribose 1-diphosphate (PRPP) to UMP and diphosphate. The protein is Uracil phosphoribosyltransferase of Ligilactobacillus salivarius (strain UCC118) (Lactobacillus salivarius).